The sequence spans 282 residues: Energy-coupling factor transporter ATP-binding protein EcfA1 (282 aa).

The ABC transporter domain maps to 9 to 243 (IEIDNLSFKY…NDELLNIGLD (235 aa)). Residue 43–50 (GHNGSGKS) coordinates ATP.

It belongs to the ABC transporter superfamily. Energy-coupling factor EcfA family. Forms a stable energy-coupling factor (ECF) transporter complex composed of 2 membrane-embedded substrate-binding proteins (S component), 2 ATP-binding proteins (A component) and 2 transmembrane proteins (T component).

It localises to the cell membrane. Its function is as follows. ATP-binding (A) component of a common energy-coupling factor (ECF) ABC-transporter complex. Unlike classic ABC transporters this ECF transporter provides the energy necessary to transport a number of different substrates. This chain is Energy-coupling factor transporter ATP-binding protein EcfA1, found in Ligilactobacillus salivarius (strain UCC118) (Lactobacillus salivarius).